The following is an 89-amino-acid chain: Small ribosomal subunit protein uS15 (89 aa).

This sequence belongs to the universal ribosomal protein uS15 family. Part of the 30S ribosomal subunit. Forms a bridge to the 50S subunit in the 70S ribosome, contacting the 23S rRNA.

In terms of biological role, one of the primary rRNA binding proteins, it binds directly to 16S rRNA where it helps nucleate assembly of the platform of the 30S subunit by binding and bridging several RNA helices of the 16S rRNA. Functionally, forms an intersubunit bridge (bridge B4) with the 23S rRNA of the 50S subunit in the ribosome. The protein is Small ribosomal subunit protein uS15 of Janthinobacterium sp. (strain Marseille) (Minibacterium massiliensis).